The following is a 207-amino-acid chain: Large ribosomal subunit protein uL4 (207 aa).

The disordered stretch occupies residues 50-76; the sequence is KTKTVSEVSGTTKKPFKQKGTGNARQG.

It belongs to the universal ribosomal protein uL4 family. Part of the 50S ribosomal subunit.

Its function is as follows. One of the primary rRNA binding proteins, this protein initially binds near the 5'-end of the 23S rRNA. It is important during the early stages of 50S assembly. It makes multiple contacts with different domains of the 23S rRNA in the assembled 50S subunit and ribosome. Functionally, forms part of the polypeptide exit tunnel. The protein is Large ribosomal subunit protein uL4 of Rickettsia canadensis (strain McKiel).